A 182-amino-acid polypeptide reads, in one-letter code: Small ribosomal subunit protein uS4c (182 aa).

The disordered stretch occupies residues 12-31; that stretch reads PGFTSKRPRSGSDLKNPLRS. The region spanning 82–143 is the S4 RNA-binding domain; it reads MRLDNILFRL…KQRSKALIQN (62 aa).

The protein belongs to the universal ribosomal protein uS4 family. In terms of assembly, part of the 30S ribosomal subunit. Contacts protein S5. The interaction surface between S4 and S5 is involved in control of translational fidelity.

The protein localises to the plastid. It localises to the chloroplast. Its function is as follows. One of the primary rRNA binding proteins, it binds directly to 16S rRNA where it nucleates assembly of the body of the 30S subunit. Functionally, with S5 and S12 plays an important role in translational accuracy. This Hymenocallis littoralis (Beach spider-lily) protein is Small ribosomal subunit protein uS4c (rps4).